The primary structure comprises 762 residues: MSSPAVARASPGGNREASGGPRSRNGPWEVGGGGERLERAGAESGRWELLLRRGELLALGGHLKGALEAFAAALRRGAPARPERLGSLVDCLVFSYRLRHGLRWSAAPAAGAAGLLSCLSCRGFLSEPVTVPCGHSYCRRCLRRELRARCRLCRDRLPPAAAASEGTPRPPPLAAAIADFRTSVVLNHLAEKWFPGQRERARAAGRLGELLHEGRYREALAAACDALRAEPSDLTLKIYRAESYAGLQEFKAALEDLNAVLFQLPNWPEVYFRKGKVLQDAGFLGDALQLFLQCLALDEDFAPAKLQVEKILCDLLSPENVREGLKESSWSSLPCIKSKPLGFPSVMEQPHSPAELGLKQPEERVEDAPEPVKGSLSRAQSAQAISAAAVPAREDGLKRVCSEPLLSAQGKGVLLKRKLSLLEQDVLINEDGRSKLKKQSESPSEDCMFSIAYGDIPEELIDVSDFECSLCMRLFFEPVTTPCGHSFCKNCLERCLDHAPYCPLCKESLKEYLADRRYCVTQLLEELIVKYLPDELSERKKIYDEETAELSHLTKNVPIFVCTMAYPTVPCPLHVFEPRYRLMIRRSIQTGTKQFGMCVSDTQNSFADYGCMLQIRNVHFLPDGRSVVDTVGGKRFRVLKRGMKDGYCTADIEYLEDVKIENGDEIRSLRELHDSVYSQACSWFQNLRDRFRSQILQHFGSMPEREENLQATPNGPAWCWWLLAVLPVDPRYQLSVLSMKSLEERLTKIQHILTYFSRDQSK.

The disordered stretch occupies residues 1–35; it reads MSSPAVARASPGGNREASGGPRSRNGPWEVGGGGE. One copy of the TPR 1 repeat lies at 47–80; that stretch reads WELLLRRGELLALGGHLKGALEAFAAALRRGAPA. The segment at 118–154 adopts an RING-type 1 zinc-finger fold; it reads CLSCRGFLSEPVTVPCGHSYCRRCLRRELRARCRLCR. TPR repeat units follow at residues 201–233, 235–267, and 268–301; these read ARAA…EPSD, TLKI…LPNW, and PEVY…DEDF. Ser420 carries the post-translational modification Phosphoserine. An RING-type 2 zinc finger spans residues 468-506; sequence CSLCMRLFFEPVTTPCGHSFCKNCLERCLDHAPYCPLCK. The Lon N-terminal domain maps to 547–757; it reads TAELSHLTKN…KIQHILTYFS (211 aa).

This Mus musculus (Mouse) protein is LON peptidase N-terminal domain and RING finger protein 1 (Lonrf1).